We begin with the raw amino-acid sequence, 311 residues long: Cell division protein ZipA (311 aa).

The Periplasmic segment spans residues 1-6 (MENLQL). The helical transmembrane segment at 7–27 (VLFVLGAIAIIAVLVHGFWSI) threads the bilayer. The Cytoplasmic portion of the chain corresponds to 28-311 (RKQQPKSLKE…YLQRIRAQLD (284 aa)). A disordered region spans residues 46 to 114 (DQASVRDSQG…FALSDEPVQR (69 aa)). Basic and acidic residues-rich tracts occupy residues 62–83 (GEVRVRKEVPATDRQEKEDKPV) and 94–103 (RDVEDSRHEQ).

This sequence belongs to the ZipA family. Interacts with FtsZ via their C-terminal domains.

It localises to the cell inner membrane. Functionally, essential cell division protein that stabilizes the FtsZ protofilaments by cross-linking them and that serves as a cytoplasmic membrane anchor for the Z ring. Also required for the recruitment to the septal ring of downstream cell division proteins. This chain is Cell division protein ZipA, found in Shewanella woodyi (strain ATCC 51908 / MS32).